The chain runs to 308 residues: Tetraacyldisaccharide 4'-kinase (308 aa).

ATP is bound at residue 63–70 (SFGGNGKT).

The protein belongs to the LpxK family.

The enzyme catalyses a lipid A disaccharide + ATP = a lipid IVA + ADP + H(+). Its pathway is glycolipid biosynthesis; lipid IV(A) biosynthesis; lipid IV(A) from (3R)-3-hydroxytetradecanoyl-[acyl-carrier-protein] and UDP-N-acetyl-alpha-D-glucosamine: step 6/6. Functionally, transfers the gamma-phosphate of ATP to the 4'-position of a tetraacyldisaccharide 1-phosphate intermediate (termed DS-1-P) to form tetraacyldisaccharide 1,4'-bis-phosphate (lipid IVA). This is Tetraacyldisaccharide 4'-kinase from Campylobacter jejuni subsp. doylei (strain ATCC BAA-1458 / RM4099 / 269.97).